The following is a 315-amino-acid chain: Putative glycosyltransferase ORF315 (315 aa).

It belongs to the glycosyltransferase group 1 family. Glycosyltransferase 4 subfamily.

The chain is Putative glycosyltransferase ORF315 from Acidianus convivator (ABV).